Consider the following 224-residue polypeptide: Response regulator protein GraR (224 aa).

In terms of domain architecture, Response regulatory spans 2–115; sequence QILLVEDDNT…VLIAKLQAIY (114 aa). Residue D51 is modified to 4-aspartylphosphate. Residues 126–224 constitute a DNA-binding region (ompR/PhoB-type); that stretch reads KRTLTWQDAI…KVGKGYMAHE (99 aa). Phosphothreonine is present on residues T128, T130, and T149.

Interacts with GraX. Phosphorylated by GraS. Phosphorylated by Stk1; phosphorylation increases the DNA-binding activity of GraR.

It localises to the cytoplasm. Its function is as follows. Member of the two-component regulatory system GraR/GraS involved in resistance against cationic antimicrobial peptides (CAMPs). Upon phosphorylation by GraS, functions as a transcription regulator by direct binding to promoter regions of target genes such as adhesins, exoproteins, transporters, toxins, and proteins involved in cell wall synthesis. Down-regulates the expression of many genes involved in RNA and amino acid synthesis or glycolysis. This is Response regulator protein GraR (graR) from Staphylococcus aureus (strain bovine RF122 / ET3-1).